The sequence spans 726 residues: Catalase-peroxidase (726 aa).

Positions 1–34 (MSMSDDTHNSLSTGKCPFHQGSHDRSAGAGTSSH) are disordered. A cross-link (tryptophyl-tyrosyl-methioninium (Trp-Tyr) (with M-252)) is located at residues 105–226 (WHGAGTYRSV…LGATEMGLIY (122 aa)). Histidine 106 (proton acceptor) is an active-site residue. A cross-link (tryptophyl-tyrosyl-methioninium (Tyr-Met) (with W-105)) is located at residues 226 to 252 (YVNPEGPDHSGEPLSAAAAIRATFGNM). Histidine 267 contributes to the heme b binding site.

Belongs to the peroxidase family. Peroxidase/catalase subfamily. As to quaternary structure, homodimer or homotetramer. Requires heme b as cofactor. In terms of processing, formation of the three residue Trp-Tyr-Met cross-link is important for the catalase, but not the peroxidase activity of the enzyme.

It carries out the reaction H2O2 + AH2 = A + 2 H2O. It catalyses the reaction 2 H2O2 = O2 + 2 H2O. Its function is as follows. Bifunctional enzyme with both catalase and broad-spectrum peroxidase activity. This is Catalase-peroxidase from Citrobacter koseri (strain ATCC BAA-895 / CDC 4225-83 / SGSC4696).